Reading from the N-terminus, the 262-residue chain is Homeobox protein Nkx-6.3 (262 aa).

Positions 140–199 (KKHTRPTFTGHQIFALEKTFEQTKYLAGPERARLAYSLGMTESQVKVWFQNRRTKWRKKS) form a DNA-binding region, homeobox. The segment at 197–237 (KKSALEPSSSTPRAPGGASGDRAASENEDDEYNKPLDPDSD) is disordered.

In terms of tissue distribution, expressed in the developing CNS and gastro-intestinal tract.

It is found in the nucleus. In terms of biological role, putative transcription factor, which may be involved in patterning of central nervous system and pancreas. In Mus musculus (Mouse), this protein is Homeobox protein Nkx-6.3 (Nkx6-3).